The chain runs to 67 residues: Large ribosomal subunit protein uL29 (67 aa).

Belongs to the universal ribosomal protein uL29 family.

This chain is Large ribosomal subunit protein uL29, found in Solibacter usitatus (strain Ellin6076).